Consider the following 327-residue polypeptide: Beta-ketoacyl-[acyl-carrier-protein] synthase III (327 aa).

Residues Cys-114 and His-254 contribute to the active site. Residues 255-259 (QANRR) are ACP-binding. The active site involves Asn-284.

Belongs to the thiolase-like superfamily. FabH family. Homodimer.

It localises to the cytoplasm. The catalysed reaction is malonyl-[ACP] + acetyl-CoA + H(+) = 3-oxobutanoyl-[ACP] + CO2 + CoA. It functions in the pathway lipid metabolism; fatty acid biosynthesis. Its function is as follows. Catalyzes the condensation reaction of fatty acid synthesis by the addition to an acyl acceptor of two carbons from malonyl-ACP. Catalyzes the first condensation reaction which initiates fatty acid synthesis and may therefore play a role in governing the total rate of fatty acid production. Possesses both acetoacetyl-ACP synthase and acetyl transacylase activities. Its substrate specificity determines the biosynthesis of branched-chain and/or straight-chain of fatty acids. The polypeptide is Beta-ketoacyl-[acyl-carrier-protein] synthase III (Lactobacillus helveticus (strain DPC 4571)).